The following is a 444-amino-acid chain: Sperm-associated antigen 4 protein (444 aa).

Residues 1–109 (MRRNPRPGSA…GGASEPSGSP (109 aa)) form a disordered region. Residues 19 to 36 (NFYSENSNSSHSATSGDS) show a composition bias toward low complexity. Transmembrane regions (helical) follow at residues 137 to 159 (FLSL…LVCV) and 166 to 188 (IRFL…WGLL). Residues 204–241 (LSQYHHRVHSQGQQLQQLQAELSKLHKEVTSVRAAHSE) are a coiled coil. One can recognise an SUN domain in the interval 267 to 428 (GASIDLEKTS…YRVRAHGVRI (162 aa)).

In terms of assembly, self-associates. Interacts with ODF1. May associate with microtubules. Interacts with SUN3 and SYNE1; suggesting the formation of a LINC complexs; a SUN domain-based heterotrimer of SPAG4 and SUN3 may associate with SYNE1. Interacts with SEPT12 and LMNB1; during spermatogenesis. Testis specific. Exclusively expressed in spermatids.

The protein localises to the membrane. It localises to the cytoplasm. The protein resides in the cytoskeleton. It is found in the flagellum axoneme. Its subcellular location is the nucleus envelope. The protein localises to the nucleus inner membrane. Its function is as follows. Involved in spermatogenesis. Required for sperm head formation but not required to establish and maintain general polarity of the sperm head. Required for anchoring and organization of the manchette. Required for targeting of SUN3 and probably SYNE1 through a probable SUN1:SYNE3 LINC complex to the nuclear envelope and involved in accurate posterior sperm head localization of the complex. May anchor SUN3 the nuclear envelope. Involved in maintenance of the nuclear envelope integrity. May assist the organization and assembly of outer dense fibers (ODFs), a specific structure of the sperm tail. The polypeptide is Sperm-associated antigen 4 protein (Spag4) (Rattus norvegicus (Rat)).